We begin with the raw amino-acid sequence, 469 residues long: Glutamate--tRNA ligase (469 aa).

A 'HIGH' region motif is present at residues 11–21 (PSPTGFIHLGN). Residues 243-247 (KMSKR) carry the 'KMSKS' region motif. K246 serves as a coordination point for ATP.

Belongs to the class-I aminoacyl-tRNA synthetase family. Glutamate--tRNA ligase type 1 subfamily. In terms of assembly, monomer.

It is found in the cytoplasm. It carries out the reaction tRNA(Glu) + L-glutamate + ATP = L-glutamyl-tRNA(Glu) + AMP + diphosphate. Its function is as follows. Catalyzes the attachment of glutamate to tRNA(Glu) in a two-step reaction: glutamate is first activated by ATP to form Glu-AMP and then transferred to the acceptor end of tRNA(Glu). The sequence is that of Glutamate--tRNA ligase from Burkholderia cenocepacia (strain ATCC BAA-245 / DSM 16553 / LMG 16656 / NCTC 13227 / J2315 / CF5610) (Burkholderia cepacia (strain J2315)).